Reading from the N-terminus, the 70-residue chain is Putative membrane protein insertion efficiency factor (70 aa).

Belongs to the UPF0161 family.

The protein localises to the cell inner membrane. Functionally, could be involved in insertion of integral membrane proteins into the membrane. This Francisella tularensis subsp. tularensis (strain SCHU S4 / Schu 4) protein is Putative membrane protein insertion efficiency factor.